We begin with the raw amino-acid sequence, 81 residues long: Mipartoxin-1 (81 aa).

The signal sequence occupies residues 1–21 (MKTLLLTLVVVTIVCLDLGNS). 4 disulfide bridges follow: Cys24–Cys42, Cys35–Cys61, Cys65–Cys73, and Cys74–Cys79.

It belongs to the three-finger toxin family. Short-chain subfamily. Contains 4 disulfide bonds. Expressed by the venom gland.

Its subcellular location is the secreted. In terms of biological role, snake venom neurotoxin that blocks neuromuscular transmission on both avian and mouse nerve-muscle preparations, presenting a postsynaptic action through the nicotinic acetylcholine receptor (nAChR). Reversibly inhibits twitches in mouse phrenic nerve diaphragm and irreversibly in chick biventer cervicis muscle. Has no cytotoxic activity towards C2C12 cells up to 180 ug/ml. In Micrurus mipartitus (Red-tailed coral snake), this protein is Mipartoxin-1.